The primary structure comprises 284 residues: 2-dehydro-3-deoxyphosphooctonate aldolase (284 aa).

This sequence belongs to the KdsA family.

It localises to the cytoplasm. It catalyses the reaction D-arabinose 5-phosphate + phosphoenolpyruvate + H2O = 3-deoxy-alpha-D-manno-2-octulosonate-8-phosphate + phosphate. It participates in carbohydrate biosynthesis; 3-deoxy-D-manno-octulosonate biosynthesis; 3-deoxy-D-manno-octulosonate from D-ribulose 5-phosphate: step 2/3. The protein operates within bacterial outer membrane biogenesis; lipopolysaccharide biosynthesis. The protein is 2-dehydro-3-deoxyphosphooctonate aldolase of Synechococcus sp. (strain ATCC 27144 / PCC 6301 / SAUG 1402/1) (Anacystis nidulans).